The primary structure comprises 520 residues: Ribonuclease Y 2 (520 aa).

Residues 7 to 23 (VVLLLASIGVGYGLRAK) form a helical membrane-spanning segment. In terms of domain architecture, KH spans 206–269 (NHRSFIAENA…AVAMETMEMI (64 aa)). One can recognise an HD domain in the interval 332–425 (ILEHSIETAK…VEAADAISGA (94 aa)).

This sequence belongs to the RNase Y family.

It localises to the cell membrane. Its function is as follows. Endoribonuclease that initiates mRNA decay. This Pediococcus pentosaceus (strain ATCC 25745 / CCUG 21536 / LMG 10740 / 183-1w) protein is Ribonuclease Y 2.